Reading from the N-terminus, the 108-residue chain is Parvalbumin beta (108 aa).

2 consecutive EF-hand domains span residues 38–73 (KPTD…FCSS) and 77–108 (LSNA…LVRS). Positions 51, 53, 55, 57, 59, 62, 90, 92, 94, 96, and 101 each coordinate Ca(2+).

The protein belongs to the parvalbumin family.

Functionally, in muscle, parvalbumin is thought to be involved in relaxation after contraction. It binds two calcium ions. The chain is Parvalbumin beta from Amphiuma means (Salamander).